Reading from the N-terminus, the 352-residue chain is MSNSAVSSANSIKLTEYSHGAGCGCKISPKVLTTILASQLPVFTDPNLLVGNQSRDDAAVYKLNDEIGIISTTDFFMPIVDDPFTFGRIAATNAISDIYAMGGTPMMAIAILGWPVNKLPAEIAQQVVDGGRQACMEAGIMLAGGHSIDAPEPIFGLAVTGQIALTDLKQNDTAKAGDRLYLTKPIGIGILTTAQKQKKLKDEDSQIAVNAMCQLNSIGAKIAKIKGVNALTDVTGFGLAGHLLEVCQGAKLTAKLDLDSVPLLPRALDYLAQGCIPGGTHRNYDSYGEHLPALTDHQKAILCDPQTSGGLLVAVSSEAEAELVALLNAHQIEPICIGSLETPTSTANVVLC.

The active site involves Cys-23. Residues Lys-26 and 54–56 (SRD) each bind ATP. Asp-57 serves as a coordination point for Mg(2+). Residues Asp-74, Asp-97, and 145–147 (GHS) each bind ATP. Mg(2+) is bound at residue Asp-97. Residue Asp-233 coordinates Mg(2+).

The protein belongs to the selenophosphate synthase 1 family. Class I subfamily. Homodimer. Mg(2+) is required as a cofactor.

The catalysed reaction is hydrogenselenide + ATP + H2O = selenophosphate + AMP + phosphate + 2 H(+). Synthesizes selenophosphate from selenide and ATP. The sequence is that of Selenide, water dikinase from Shewanella sp. (strain MR-4).